A 568-amino-acid polypeptide reads, in one-letter code: Nucleoprotein (568 aa).

A binding site for the cap structure m7GTP region spans residues 54–240 (MRKEKRDDSD…IDGNKSAINI (187 aa)). Asp388 and Glu390 together coordinate Mn(2+). Glu398, Cys505, His508, and Cys528 together coordinate Zn(2+). A Mn(2+)-binding site is contributed by Asp532.

The protein belongs to the arenaviridae nucleocapsid protein family. Homomultimerizes to form the nucleocapsid. Binds to viral genomic RNA. Interacts with glycoprotein G2. Interacts with protein Z; this interaction probably directs the encapsidated genome to budding sites. Interacts with protein L; this interaction does not interfere with Z-L interaction. Interacts with host IKBKE (via Protein kinase domain); the interaction inhibits IKBKE kinase activity.

Its subcellular location is the virion. It localises to the host cytoplasm. Functionally, encapsidates the genome, protecting it from nucleases. The encapsidated genomic RNA is termed the nucleocapsid (NC). Serves as template for viral transcription and replication. The increased presence of protein N in host cell does not seem to trigger the switch from transcription to replication as observed in other negative strain RNA viruses. Through the interaction with host IKBKE, strongly inhibits the phosphorylation and nuclear translocation of host IRF3, a protein involved in interferon activation pathway, leading to the inhibition of interferon-beta and IRF3-dependent promoters activation. Also encodes a functional 3'-5' exoribonuclease that degrades preferentially dsRNA substrates and thereby participates in the suppression of interferon induction. This chain is Nucleoprotein, found in Praomys (African soft-furred rats).